Reading from the N-terminus, the 142-residue chain is Transcriptional regulator MraZ (142 aa).

2 consecutive SpoVT-AbrB domains span residues 5-47 and 76-119; these read RFTH…PMDS and ATVV…SPEN.

This sequence belongs to the MraZ family. In terms of assembly, forms oligomers.

The protein resides in the cytoplasm. The protein localises to the nucleoid. The sequence is that of Transcriptional regulator MraZ from Thermomicrobium roseum (strain ATCC 27502 / DSM 5159 / P-2).